The chain runs to 220 residues: 3-dehydroquinate dehydratase (220 aa).

3-dehydroquinate contacts are provided by residues S8, E30–R32, and R63. The active-site Proton donor/acceptor is H114. K140 acts as the Schiff-base intermediate with substrate in catalysis. Residues R174 and Q197 each coordinate 3-dehydroquinate.

It belongs to the type-I 3-dehydroquinase family. As to quaternary structure, homodimer.

It catalyses the reaction 3-dehydroquinate = 3-dehydroshikimate + H2O. It participates in metabolic intermediate biosynthesis; chorismate biosynthesis; chorismate from D-erythrose 4-phosphate and phosphoenolpyruvate: step 3/7. Functionally, involved in the third step of the chorismate pathway, which leads to the biosynthesis of aromatic amino acids. Catalyzes the cis-dehydration of 3-dehydroquinate (DHQ) and introduces the first double bond of the aromatic ring to yield 3-dehydroshikimate. The polypeptide is 3-dehydroquinate dehydratase (Saccharolobus solfataricus (strain ATCC 35092 / DSM 1617 / JCM 11322 / P2) (Sulfolobus solfataricus)).